A 274-amino-acid polypeptide reads, in one-letter code: Transcription factor MYB58 (274 aa).

HTH myb-type domains are found at residues 11–63 and 64–118; these read KTKV…INYL and RPDV…KKRL. 2 consecutive DNA-binding regions (H-T-H motif) follow at residues 39 to 63 and 91 to 114; these read WRSLPKQAGLLRCGKSCRLRWINYL and WSKIASKLPGRTDNEIKNVWHTHL. 2 disordered regions span residues 121-160 and 237-274; these read ETNLNADEAGSKGSLNEEENSQESSPNASMSFAGSNISSK and SELGLEENDNQQQQQQHKQGTEDEHSSSLLESYELLIH. The span at 263-274 shows a compositional bias: low complexity; sequence SSLLESYELLIH.

As to expression, expressed in leaves. Specifically expressed in fibers and vessels undergoing secondary wall thickening, especially in inflorescence stems.

The protein localises to the nucleus. In terms of biological role, transcriptional activator that binds DNA to the AC cis-elements 5'-ACCTACC-3', 5'-ACCAACC-3' and 5'-ACCTAAC-3' of promoters and specifically activates lignin biosynthetic genes during secondary wall formation mediated by SND1. The chain is Transcription factor MYB58 from Arabidopsis thaliana (Mouse-ear cress).